A 48-amino-acid polypeptide reads, in one-letter code: MTPQIIPFFFMHQFTYGFLVILLTLLLLSYAFLSMILRLYLSRIYLSK.

The chain crosses the membrane as a helical span at residues G17–L37.

Belongs to the ATPase protein 8 family.

It localises to the membrane. In Eremothecium gossypii (strain ATCC 10895 / CBS 109.51 / FGSC 9923 / NRRL Y-1056) (Yeast), this protein is Putative ATP synthase protein 8-like protein.